The sequence spans 169 residues: Allophycocyanin subunit beta-18 (169 aa).

Asn-72 carries the post-translational modification N4-methylasparagine. Cys-82 contacts (2R,3E)-phycocyanobilin.

Belongs to the phycobiliprotein family. Heterodimer of an alpha and a beta chain. Contains one covalently linked phycocyanobilin chromophore.

The protein resides in the plastid. Its subcellular location is the cyanelle thylakoid membrane. Light-harvesting photosynthetic bile pigment-protein from the phycobiliprotein complex. Allophycocyanin has a maximum absorption at approximately 650 nanometers. The polypeptide is Allophycocyanin subunit beta-18 (apcF) (Cyanophora paradoxa).